A 176-amino-acid chain; its full sequence is Shikimate kinase (176 aa).

12 to 17 (GSGKST) is an ATP binding site. Residue S16 participates in Mg(2+) binding. Positions 34, 58, and 80 each coordinate substrate. R117 lines the ATP pocket. R136 is a substrate binding site. R153 contributes to the ATP binding site.

It belongs to the shikimate kinase family. Monomer. Mg(2+) serves as cofactor.

The protein resides in the cytoplasm. It catalyses the reaction shikimate + ATP = 3-phosphoshikimate + ADP + H(+). It participates in metabolic intermediate biosynthesis; chorismate biosynthesis; chorismate from D-erythrose 4-phosphate and phosphoenolpyruvate: step 5/7. In terms of biological role, catalyzes the specific phosphorylation of the 3-hydroxyl group of shikimic acid using ATP as a cosubstrate. The sequence is that of Shikimate kinase from Mycobacterium avium (strain 104).